The sequence spans 130 residues: MIGNWNYGTGRRKTSVARVFIKKGSGKIVVNGKPVDEFFARETGRMIVHQPLELTGHLESFDIKVNVHGGGETGQAGAVRHGITRALIDYDAALKPALSQAGFVTRDAREVERKKVGFRKARRRKQFSKR.

This sequence belongs to the universal ribosomal protein uS9 family.

This Bordetella pertussis (strain Tohama I / ATCC BAA-589 / NCTC 13251) protein is Small ribosomal subunit protein uS9.